The chain runs to 339 residues: Mycothiol acetyltransferase (339 aa).

N-acetyltransferase domains follow at residues 8–174 (YEQL…QGLT) and 176–339 (LTYP…GELN). Glu-39 contributes to the 1D-myo-inositol 2-(L-cysteinylamino)-2-deoxy-alpha-D-glucopyranoside binding site. 85–87 (LAV) contributes to the acetyl-CoA binding site. 3 residues coordinate 1D-myo-inositol 2-(L-cysteinylamino)-2-deoxy-alpha-D-glucopyranoside: Glu-207, Lys-254, and Glu-270. 274–276 (VCL) contacts acetyl-CoA. Residue Tyr-308 coordinates 1D-myo-inositol 2-(L-cysteinylamino)-2-deoxy-alpha-D-glucopyranoside.

The protein belongs to the acetyltransferase family. MshD subfamily. As to quaternary structure, monomer.

The catalysed reaction is 1D-myo-inositol 2-(L-cysteinylamino)-2-deoxy-alpha-D-glucopyranoside + acetyl-CoA = mycothiol + CoA + H(+). Catalyzes the transfer of acetyl from acetyl-CoA to desacetylmycothiol (Cys-GlcN-Ins) to form mycothiol. The chain is Mycothiol acetyltransferase from Corynebacterium urealyticum (strain ATCC 43042 / DSM 7109).